Consider the following 161-residue polypeptide: Endoribonuclease YbeY (161 aa).

Zn(2+)-binding residues include His121, His125, and His131.

This sequence belongs to the endoribonuclease YbeY family. Zn(2+) is required as a cofactor.

It is found in the cytoplasm. In terms of biological role, single strand-specific metallo-endoribonuclease involved in late-stage 70S ribosome quality control and in maturation of the 3' terminus of the 16S rRNA. The chain is Endoribonuclease YbeY from Xylella fastidiosa (strain 9a5c).